The chain runs to 280 residues: DegV domain-containing protein Mb2440c (280 aa).

A DegV domain is found at 3–274 (VVVVTDTSCR…AGAVGVCVDV (272 aa)). Ser89 is a hexadecanoate binding site.

Its function is as follows. May bind long-chain fatty acids, such as palmitate, and may play a role in lipid transport or fatty acid metabolism. The protein is DegV domain-containing protein Mb2440c of Mycobacterium bovis (strain ATCC BAA-935 / AF2122/97).